A 130-amino-acid polypeptide reads, in one-letter code: Small ribosomal subunit protein uS11 (130 aa).

It belongs to the universal ribosomal protein uS11 family. As to quaternary structure, part of the 30S ribosomal subunit.

Its function is as follows. Located on the platform of the 30S subunit. The polypeptide is Small ribosomal subunit protein uS11 (Ignicoccus hospitalis (strain KIN4/I / DSM 18386 / JCM 14125)).